The primary structure comprises 442 residues: tRNA modification GTPase MnmE (442 aa).

(6S)-5-formyl-5,6,7,8-tetrahydrofolate-binding residues include Arg-27, Glu-84, and Lys-124. One can recognise a TrmE-type G domain in the interval 221–366 (GFQIVILGAP…LMELISQASA (146 aa)). GTP contacts are provided by residues 231-236 (NAGKSS), 250-256 (TEEPGTT), 275-278 (DTAG), and 329-332 (NKAD). Positions 235 and 256 each coordinate Mg(2+). (6S)-5-formyl-5,6,7,8-tetrahydrofolate is bound at residue Lys-442.

It belongs to the TRAFAC class TrmE-Era-EngA-EngB-Septin-like GTPase superfamily. TrmE GTPase family. In terms of assembly, homodimer. Heterotetramer of two MnmE and two MnmG subunits. It depends on K(+) as a cofactor.

It is found in the cytoplasm. Its function is as follows. Exhibits a very high intrinsic GTPase hydrolysis rate. Involved in the addition of a carboxymethylaminomethyl (cmnm) group at the wobble position (U34) of certain tRNAs, forming tRNA-cmnm(5)s(2)U34. This chain is tRNA modification GTPase MnmE, found in Chelativorans sp. (strain BNC1).